The following is a 470-amino-acid chain: Cyclic AMP receptor-like protein D (470 aa).

Residues 1-16 lie on the Extracellular side of the membrane; the sequence is MSSCSSLSMDDRVKIG. A helical membrane pass occupies residues 17 to 37; the sequence is YGSIAGASLSIIGSIGTIILI. Residues 38–123 are Cytoplasmic-facing; sequence KIRNKKQEKK…NNNQKTKVSH (86 aa). The chain crosses the membrane as a helical span at residues 124–144; sequence FIINLSIANLLASIFMITIKL. Residues 145 to 176 lie on the Extracellular side of the membrane; that stretch reads MMIHFNDKFIKVLPSTANHSFNALISVCTIGN. Asn-162 carries N-linked (GlcNAc...) asparagine glycosylation. A disulfide bridge links Cys-172 with Cys-287. The chain crosses the membrane as a helical span at residues 177 to 197; the sequence is GVIGFSFISTFFWTLAISMYI. Residues 198–253 are Cytoplasmic-facing; it reads YQQFLSSSTINSNNNNNNINNINNNNNNNINNINNSKNNNSINNFNNSNKSNKIIK. Residues 254-274 traverse the membrane as a helical segment; it reads MLFYFVCWVIPFVLGSILVSG. At 275 to 295 the chain is on the extracellular side; that stretch reads SRLIELNSDLPWCSIDSNIQL. The chain crosses the membrane as a helical span at residues 296–316; sequence ISFYFPLIICLLATTFFTILI. At 317-342 the chain is on the cytoplasmic side; the sequence is KYKFSNDKLACSSSSLINLQSKIIQR. A helical membrane pass occupies residues 343-363; the sequence is LILFLIVILVCWVPSLISFFI. The Extracellular portion of the chain corresponds to 364 to 372; the sequence is SFFSKNCKQ. Residues 373 to 393 form a helical membrane-spanning segment; it reads FLWLEIISSTIQSCQGILNFL. Topologically, residues 394-470 are cytoplasmic; the sequence is SYLSIFKKLK…DFDNNQIQEK (77 aa).

The protein belongs to the G-protein coupled receptor 5 family.

The protein resides in the membrane. Functionally, receptor for cAMP. The sequence is that of Cyclic AMP receptor-like protein D (crlD) from Dictyostelium discoideum (Social amoeba).